Consider the following 156-residue polypeptide: Ribonuclease H (156 aa).

The RNase H type-1 domain occupies 1–142; sequence MGKQVEIFTD…CDELARAAAN (142 aa). D10, E48, D70, and D134 together coordinate Mg(2+).

It belongs to the RNase H family. As to quaternary structure, monomer. Mg(2+) is required as a cofactor.

The protein localises to the cytoplasm. It catalyses the reaction Endonucleolytic cleavage to 5'-phosphomonoester.. Functionally, endonuclease that specifically degrades the RNA of RNA-DNA hybrids. This chain is Ribonuclease H, found in Photorhabdus luminescens (Xenorhabdus luminescens).